A 426-amino-acid chain; its full sequence is Histidine--tRNA ligase (426 aa).

This sequence belongs to the class-II aminoacyl-tRNA synthetase family. As to quaternary structure, homodimer.

The protein localises to the cytoplasm. The catalysed reaction is tRNA(His) + L-histidine + ATP = L-histidyl-tRNA(His) + AMP + diphosphate + H(+). The polypeptide is Histidine--tRNA ligase (Chlorobium phaeovibrioides (strain DSM 265 / 1930) (Prosthecochloris vibrioformis (strain DSM 265))).